Here is a 561-residue protein sequence, read N- to C-terminus: DNA ligase B (561 aa).

Lys-125 serves as the catalytic N6-AMP-lysine intermediate.

Belongs to the NAD-dependent DNA ligase family. LigB subfamily.

It catalyses the reaction NAD(+) + (deoxyribonucleotide)n-3'-hydroxyl + 5'-phospho-(deoxyribonucleotide)m = (deoxyribonucleotide)n+m + AMP + beta-nicotinamide D-nucleotide.. In terms of biological role, catalyzes the formation of phosphodiester linkages between 5'-phosphoryl and 3'-hydroxyl groups in double-stranded DNA using NAD as a coenzyme and as the energy source for the reaction. The protein is DNA ligase B of Salmonella paratyphi A (strain AKU_12601).